Here is a 296-residue protein sequence, read N- to C-terminus: tRNA dimethylallyltransferase (296 aa).

G2–T9 serves as a coordination point for ATP. A substrate-binding site is contributed by T4–T9. 3 interaction with substrate tRNA regions span residues D27–L30, Q151–R155, and R232–R237.

Belongs to the IPP transferase family. As to quaternary structure, monomer. Mg(2+) is required as a cofactor.

The catalysed reaction is adenosine(37) in tRNA + dimethylallyl diphosphate = N(6)-dimethylallyladenosine(37) in tRNA + diphosphate. Functionally, catalyzes the transfer of a dimethylallyl group onto the adenine at position 37 in tRNAs that read codons beginning with uridine, leading to the formation of N6-(dimethylallyl)adenosine (i(6)A). This Shewanella frigidimarina (strain NCIMB 400) protein is tRNA dimethylallyltransferase.